The chain runs to 142 residues: UPF0102 protein PsycPRwf_0497 (142 aa).

This sequence belongs to the UPF0102 family.

This Psychrobacter sp. (strain PRwf-1) protein is UPF0102 protein PsycPRwf_0497.